A 213-amino-acid chain; its full sequence is Thiamine-phosphate synthase (213 aa).

Residues 42–46 and D77 each bind 4-amino-2-methyl-5-(diphosphooxymethyl)pyrimidine; that span reads QYREK. D78 and D97 together coordinate Mg(2+). S116 lines the 4-amino-2-methyl-5-(diphosphooxymethyl)pyrimidine pocket. 142–144 contacts 2-[(2R,5Z)-2-carboxy-4-methylthiazol-5(2H)-ylidene]ethyl phosphate; it reads TIS. K145 contributes to the 4-amino-2-methyl-5-(diphosphooxymethyl)pyrimidine binding site. Residues G173 and 193-194 each bind 2-[(2R,5Z)-2-carboxy-4-methylthiazol-5(2H)-ylidene]ethyl phosphate; that span reads IS.

Belongs to the thiamine-phosphate synthase family. Requires Mg(2+) as cofactor.

The enzyme catalyses 2-[(2R,5Z)-2-carboxy-4-methylthiazol-5(2H)-ylidene]ethyl phosphate + 4-amino-2-methyl-5-(diphosphooxymethyl)pyrimidine + 2 H(+) = thiamine phosphate + CO2 + diphosphate. It carries out the reaction 2-(2-carboxy-4-methylthiazol-5-yl)ethyl phosphate + 4-amino-2-methyl-5-(diphosphooxymethyl)pyrimidine + 2 H(+) = thiamine phosphate + CO2 + diphosphate. It catalyses the reaction 4-methyl-5-(2-phosphooxyethyl)-thiazole + 4-amino-2-methyl-5-(diphosphooxymethyl)pyrimidine + H(+) = thiamine phosphate + diphosphate. Its pathway is cofactor biosynthesis; thiamine diphosphate biosynthesis; thiamine phosphate from 4-amino-2-methyl-5-diphosphomethylpyrimidine and 4-methyl-5-(2-phosphoethyl)-thiazole: step 1/1. Its function is as follows. Condenses 4-methyl-5-(beta-hydroxyethyl)thiazole monophosphate (THZ-P) and 2-methyl-4-amino-5-hydroxymethyl pyrimidine pyrophosphate (HMP-PP) to form thiamine monophosphate (TMP). The sequence is that of Thiamine-phosphate synthase from Limosilactobacillus fermentum (strain NBRC 3956 / LMG 18251) (Lactobacillus fermentum).